The primary structure comprises 482 residues: Probable cytochrome P450 508D1 (482 aa).

The chain crosses the membrane as a helical span at residues 1–21; the sequence is MVYLKNILIFLIIFLINPLVK. Heme is bound at residue Cys428.

This sequence belongs to the cytochrome P450 family. Heme is required as a cofactor.

Its subcellular location is the membrane. This chain is Probable cytochrome P450 508D1 (cyp508D1), found in Dictyostelium discoideum (Social amoeba).